We begin with the raw amino-acid sequence, 213 residues long: NAD(P)H-hydrate epimerase (213 aa).

Residues 8 to 210 enclose the YjeF N-terminal domain; it reads MYNIEENGHA…KIGIPPEAEK (203 aa). 55–59 provides a ligand contact to (6S)-NADPHX; the sequence is NNGGD. Residues Asn56 and Asp122 each coordinate K(+). (6S)-NADPHX is bound by residues 126–132, Tyr137, and Asp155; that span reads GTGITGE. Ser158 contacts K(+).

The protein belongs to the NnrE/AIBP family. K(+) is required as a cofactor.

The enzyme catalyses (6R)-NADHX = (6S)-NADHX. The catalysed reaction is (6R)-NADPHX = (6S)-NADPHX. Its function is as follows. Catalyzes the epimerization of the S- and R-forms of NAD(P)HX, a damaged form of NAD(P)H that is a result of enzymatic or heat-dependent hydration. This is a prerequisite for the S-specific NAD(P)H-hydrate dehydratase to allow the repair of both epimers of NAD(P)HX. This Cenarchaeum symbiosum (strain A) protein is NAD(P)H-hydrate epimerase.